The sequence spans 489 residues: NADH-quinone oxidoreductase subunit N (489 aa).

14 consecutive transmembrane segments (helical) span residues 8 to 28, 35 to 55, 75 to 95, 105 to 125, 127 to 147, 159 to 179, 203 to 223, 235 to 255, 271 to 291, 303 to 323, 329 to 349, 374 to 394, 407 to 427, and 456 to 476; these read LIAM…MLSI, FTIA…LYYV, FFTA…YPWL, FYML…AHHL, SMFI…GYAF, YMLL…LLYA, VLAG…LFPF, PAPT…AVVM, MILG…ALTQ, VSHL…PILA, IYLA…AVAS, AVVM…LGFI, SLWW…FYYL, and LITL…QPLI.

This sequence belongs to the complex I subunit 2 family. As to quaternary structure, NDH-1 is composed of 13 different subunits. Subunits NuoA, H, J, K, L, M, N constitute the membrane sector of the complex.

The protein localises to the cell inner membrane. It catalyses the reaction a quinone + NADH + 5 H(+)(in) = a quinol + NAD(+) + 4 H(+)(out). In terms of biological role, NDH-1 shuttles electrons from NADH, via FMN and iron-sulfur (Fe-S) centers, to quinones in the respiratory chain. The immediate electron acceptor for the enzyme in this species is believed to be ubiquinone. Couples the redox reaction to proton translocation (for every two electrons transferred, four hydrogen ions are translocated across the cytoplasmic membrane), and thus conserves the redox energy in a proton gradient. The polypeptide is NADH-quinone oxidoreductase subunit N (Proteus mirabilis (strain HI4320)).